A 392-amino-acid chain; its full sequence is uncharacterized protein (392 aa).

It belongs to the chlamydial CPn_0675/CT_696/TC_0068 family.

This is an uncharacterized protein from Chlamydia trachomatis serovar D (strain ATCC VR-885 / DSM 19411 / UW-3/Cx).